Consider the following 378-residue polypeptide: Ribosomal RNA large subunit methyltransferase G (378 aa).

The protein belongs to the methyltransferase superfamily. RlmG family.

Its subcellular location is the cytoplasm. It catalyses the reaction guanosine(1835) in 23S rRNA + S-adenosyl-L-methionine = N(2)-methylguanosine(1835) in 23S rRNA + S-adenosyl-L-homocysteine + H(+). In terms of biological role, specifically methylates the guanine in position 1835 (m2G1835) of 23S rRNA. In Shigella boydii serotype 4 (strain Sb227), this protein is Ribosomal RNA large subunit methyltransferase G.